The following is a 201-amino-acid chain: 3-isopropylmalate dehydratase small subunit (201 aa).

The protein belongs to the LeuD family. LeuD type 1 subfamily. As to quaternary structure, heterodimer of LeuC and LeuD.

The catalysed reaction is (2R,3S)-3-isopropylmalate = (2S)-2-isopropylmalate. Its pathway is amino-acid biosynthesis; L-leucine biosynthesis; L-leucine from 3-methyl-2-oxobutanoate: step 2/4. In terms of biological role, catalyzes the isomerization between 2-isopropylmalate and 3-isopropylmalate, via the formation of 2-isopropylmaleate. In Escherichia fergusonii (strain ATCC 35469 / DSM 13698 / CCUG 18766 / IAM 14443 / JCM 21226 / LMG 7866 / NBRC 102419 / NCTC 12128 / CDC 0568-73), this protein is 3-isopropylmalate dehydratase small subunit.